The following is a 107-amino-acid chain: Large ribosomal subunit protein P1 (107 aa).

Residues 67–107 are disordered; it reads GAAPAAAAPAAGGAPAAGAAPKKEEKKEPSEEEDMGFSLFD. Residues 69-86 are compositionally biased toward low complexity; it reads APAAAAPAAGGAPAAGAA.

This sequence belongs to the eukaryotic ribosomal protein P1/P2 family. As to quaternary structure, P1 and P2 exist as dimers at the large ribosomal subunit.

Functionally, plays an important role in the elongation step of protein synthesis. The chain is Large ribosomal subunit protein P1 from Chlamydomonas reinhardtii (Chlamydomonas smithii).